The chain runs to 132 residues: Small ribosomal subunit protein uS8 (132 aa).

The protein belongs to the universal ribosomal protein uS8 family. In terms of assembly, part of the 30S ribosomal subunit. Contacts proteins S5 and S12.

One of the primary rRNA binding proteins, it binds directly to 16S rRNA central domain where it helps coordinate assembly of the platform of the 30S subunit. The polypeptide is Small ribosomal subunit protein uS8 (Streptomyces avermitilis (strain ATCC 31267 / DSM 46492 / JCM 5070 / NBRC 14893 / NCIMB 12804 / NRRL 8165 / MA-4680)).